We begin with the raw amino-acid sequence, 492 residues long: Acetyl-coenzyme A carboxylase carboxyl transferase subunit beta, chloroplastic (492 aa).

The segment at 198–219 (STNGSDLTISESSNESESSNES) is disordered. The CoA carboxyltransferase N-terminal domain maps to 228-492 (LWVQCENCYG…FHGRFPLNQN (265 aa)). Cys-232, Cys-235, Cys-251, and Cys-254 together coordinate Zn(2+). Residues 232 to 254 (CENCYGLNYKKFLKSKMYLCEQC) form a C4-type zinc finger.

It belongs to the AccD/PCCB family. In terms of assembly, acetyl-CoA carboxylase is a heterohexamer composed of biotin carboxyl carrier protein, biotin carboxylase and 2 subunits each of ACCase subunit alpha and ACCase plastid-coded subunit beta (accD). Requires Zn(2+) as cofactor.

Its subcellular location is the plastid. It localises to the chloroplast stroma. The catalysed reaction is N(6)-carboxybiotinyl-L-lysyl-[protein] + acetyl-CoA = N(6)-biotinyl-L-lysyl-[protein] + malonyl-CoA. It functions in the pathway lipid metabolism; malonyl-CoA biosynthesis; malonyl-CoA from acetyl-CoA: step 1/1. In terms of biological role, component of the acetyl coenzyme A carboxylase (ACC) complex. Biotin carboxylase (BC) catalyzes the carboxylation of biotin on its carrier protein (BCCP) and then the CO(2) group is transferred by the transcarboxylase to acetyl-CoA to form malonyl-CoA. The protein is Acetyl-coenzyme A carboxylase carboxyl transferase subunit beta, chloroplastic of Citrus sinensis (Sweet orange).